A 338-amino-acid chain; its full sequence is Ketol-acid reductoisomerase (NADP(+)) (338 aa).

One can recognise a KARI N-terminal Rossmann domain in the interval 1–181; it reads MQVYYDKDCD…GGGRSGIIET (181 aa). NADP(+) is bound by residues 24-27, Arg47, Ser50, Ser52, and 82-85; these read YGSQ and DEFQ. His107 is an active-site residue. Gly133 is an NADP(+) binding site. The 146-residue stretch at 182 to 327 folds into the KARI C-terminal knotted domain; the sequence is TFKDETETDL…GKLRAMMPWI (146 aa). Asp190, Glu194, Glu226, and Glu230 together coordinate Mg(2+). Position 251 (Ser251) interacts with substrate.

This sequence belongs to the ketol-acid reductoisomerase family. Mg(2+) is required as a cofactor.

It carries out the reaction (2R)-2,3-dihydroxy-3-methylbutanoate + NADP(+) = (2S)-2-acetolactate + NADPH + H(+). The enzyme catalyses (2R,3R)-2,3-dihydroxy-3-methylpentanoate + NADP(+) = (S)-2-ethyl-2-hydroxy-3-oxobutanoate + NADPH + H(+). It participates in amino-acid biosynthesis; L-isoleucine biosynthesis; L-isoleucine from 2-oxobutanoate: step 2/4. Its pathway is amino-acid biosynthesis; L-valine biosynthesis; L-valine from pyruvate: step 2/4. Its function is as follows. Involved in the biosynthesis of branched-chain amino acids (BCAA). Catalyzes an alkyl-migration followed by a ketol-acid reduction of (S)-2-acetolactate (S2AL) to yield (R)-2,3-dihydroxy-isovalerate. In the isomerase reaction, S2AL is rearranged via a Mg-dependent methyl migration to produce 3-hydroxy-3-methyl-2-ketobutyrate (HMKB). In the reductase reaction, this 2-ketoacid undergoes a metal-dependent reduction by NADPH to yield (R)-2,3-dihydroxy-isovalerate. This is Ketol-acid reductoisomerase (NADP(+)) from Saccharophagus degradans (strain 2-40 / ATCC 43961 / DSM 17024).